Consider the following 813-residue polypeptide: Ankyrin repeat domain-containing protein SOWAHB (813 aa).

Disordered stretches follow at residues 142-256 (SAAP…QSLS) and 400-436 (ETCG…DSHK). Positions 158-176 (MSEKARVNPSHWDTKRYYP) are enriched in basic and acidic residues. Residues 177-189 (EDPPVPDSLPVSP) are compositionally biased toward pro residues. A compositionally biased stretch (polar residues) spans 191-202 (CTNTRQSSFTST). Low complexity predominate over residues 208-244 (HSLSSNNLSSSFSSPESPGLVAKPYNASPSPAGSSPN). A compositionally biased stretch (polar residues) spans 245–256 (IREQTPKSQSLS). Over residues 400–416 (ETCGSEESDSGEGGDCD) the composition is skewed to acidic residues. ANK repeat units follow at residues 657–686 (TGYT…KAGI) and 696–726 (NGYT…NVKV).

It belongs to the SOWAH family.

This chain is Ankyrin repeat domain-containing protein SOWAHB (sowahb), found in Xenopus laevis (African clawed frog).